The sequence spans 123 residues: Small ribosomal subunit protein uS12c (123 aa).

Residues 1–16 are compositionally biased toward polar residues; it reads MPTIQQLIRNSRQPAE. The segment at 1 to 23 is disordered; that stretch reads MPTIQQLIRNSRQPAENRTKSPA.

The protein belongs to the universal ribosomal protein uS12 family. In terms of assembly, part of the 30S ribosomal subunit.

Its subcellular location is the plastid. It is found in the chloroplast. In terms of biological role, with S4 and S5 plays an important role in translational accuracy. Located at the interface of the 30S and 50S subunits. The chain is Small ribosomal subunit protein uS12c (rps12) from Staurastrum punctulatum (Green alga).